The sequence spans 122 residues: MAKISRKLQTQKRHKRLRRYLIGNKIRPRLAVFRSNNHIYAQVIDDDAQQTICSASTVDKELKEDSDKLSPNCSSSTIVGKLLAKRAIKKGIKQVIFDRGGNLYHGRVKALADAARDAGLNF.

The protein belongs to the universal ribosomal protein uL18 family. Part of the 50S ribosomal subunit; part of the 5S rRNA/L5/L18/L25 subcomplex. Contacts the 5S and 23S rRNAs.

Functionally, this is one of the proteins that bind and probably mediate the attachment of the 5S RNA into the large ribosomal subunit, where it forms part of the central protuberance. The chain is Large ribosomal subunit protein uL18 from Prochlorococcus marinus (strain MIT 9515).